The following is a 264-amino-acid chain: uncharacterized protein (264 aa).

Helical transmembrane passes span 1-21, 43-63, 95-115, 146-166, 181-201, and 215-235; these read MLLG…SVSL, FFGV…NGFV, VVGL…LSSL, IATW…LGGL, GWLA…QPFV, and IVAN…MFFP.

To M.pneumoniae MPN_308 C-terminal region.

The protein localises to the cell membrane. This is an uncharacterized protein from Mycoplasma pneumoniae (strain ATCC 29342 / M129 / Subtype 1) (Mycoplasmoides pneumoniae).